The following is a 289-amino-acid chain: ATP synthase gamma chain (289 aa).

This sequence belongs to the ATPase gamma chain family. As to quaternary structure, F-type ATPases have 2 components, CF(1) - the catalytic core - and CF(0) - the membrane proton channel. CF(1) has five subunits: alpha(3), beta(3), gamma(1), delta(1), epsilon(1). CF(0) has three main subunits: a, b and c.

It is found in the cell inner membrane. Functionally, produces ATP from ADP in the presence of a proton gradient across the membrane. The gamma chain is believed to be important in regulating ATPase activity and the flow of protons through the CF(0) complex. This Cereibacter sphaeroides (strain ATCC 17025 / ATH 2.4.3) (Rhodobacter sphaeroides) protein is ATP synthase gamma chain.